A 303-amino-acid polypeptide reads, in one-letter code: Sulfate adenylyltransferase subunit 2 (303 aa).

The interval 282–303 (SGRLIDHDESGSMEKKKREGYF) is disordered.

This sequence belongs to the PAPS reductase family. CysD subfamily. In terms of assembly, heterodimer composed of CysD, the smaller subunit, and CysN.

The enzyme catalyses sulfate + ATP + H(+) = adenosine 5'-phosphosulfate + diphosphate. It participates in sulfur metabolism; hydrogen sulfide biosynthesis; sulfite from sulfate: step 1/3. Its function is as follows. With CysN forms the ATP sulfurylase (ATPS) that catalyzes the adenylation of sulfate producing adenosine 5'-phosphosulfate (APS) and diphosphate, the first enzymatic step in sulfur assimilation pathway. APS synthesis involves the formation of a high-energy phosphoric-sulfuric acid anhydride bond driven by GTP hydrolysis by CysN coupled to ATP hydrolysis by CysD. The protein is Sulfate adenylyltransferase subunit 2 of Maricaulis maris (strain MCS10) (Caulobacter maris).